The primary structure comprises 705 residues: Elongation factor G (705 aa).

Residues 8–291 (EKVRNIGIMA…AVVEYLPSPI (284 aa)) enclose the tr-type G domain. GTP-binding positions include 17–24 (AHIDAGKT), 90–94 (DTPGH), and 144–147 (NKMD).

The protein belongs to the TRAFAC class translation factor GTPase superfamily. Classic translation factor GTPase family. EF-G/EF-2 subfamily.

Its subcellular location is the cytoplasm. Its function is as follows. Catalyzes the GTP-dependent ribosomal translocation step during translation elongation. During this step, the ribosome changes from the pre-translocational (PRE) to the post-translocational (POST) state as the newly formed A-site-bound peptidyl-tRNA and P-site-bound deacylated tRNA move to the P and E sites, respectively. Catalyzes the coordinated movement of the two tRNA molecules, the mRNA and conformational changes in the ribosome. This Chloroherpeton thalassium (strain ATCC 35110 / GB-78) protein is Elongation factor G.